Here is a 424-residue protein sequence, read N- to C-terminus: Zinc finger and BTB domain-containing protein 6 (424 aa).

In terms of domain architecture, BTB spans 33 to 97 (CDVSIYINDT…CYTGALEVKR (65 aa)). Position 202 is a phosphoserine (serine 202). 4 consecutive C2H2-type zinc fingers follow at residues 301–323 (HQCP…LKMH), 326–348 (FLCL…IRGH), 354–376 (FQCT…LNIH), and 382–405 (YKCH…TSLH). A disordered region spans residues 403 to 424 (SLHGRSSGEKLPRHDLERQNLL). Basic and acidic residues predominate over residues 408-424 (SSGEKLPRHDLERQNLL).

It is found in the nucleus. Its function is as follows. May be involved in transcriptional regulation. In Bos taurus (Bovine), this protein is Zinc finger and BTB domain-containing protein 6 (ZBTB6).